The following is a 502-amino-acid chain: Lysine--tRNA ligase (502 aa).

Mg(2+) contacts are provided by Glu-413 and Glu-420.

This sequence belongs to the class-II aminoacyl-tRNA synthetase family. Homodimer. Mg(2+) is required as a cofactor.

It localises to the cytoplasm. It catalyses the reaction tRNA(Lys) + L-lysine + ATP = L-lysyl-tRNA(Lys) + AMP + diphosphate. The chain is Lysine--tRNA ligase from Haemophilus influenzae (strain PittGG).